Here is a 596-residue protein sequence, read N- to C-terminus: Chaperone protein DnaK (596 aa).

Residue Thr180 is modified to Phosphothreonine; by autocatalysis.

This sequence belongs to the heat shock protein 70 family.

Functionally, acts as a chaperone. The chain is Chaperone protein DnaK from Thermotoga neapolitana (strain ATCC 49049 / DSM 4359 / NBRC 107923 / NS-E).